A 513-amino-acid chain; its full sequence is Probable G-protein coupled receptor 176 (513 aa).

A disordered region spans residues 1 to 25 (MGHNGSWVSPNTSHPRNTSGAQAGA). Residues 1–41 (MGHNGSWVSPNTSHPRNTSGAQAGANSSAFGELSEAQLYRQ) lie on the Extracellular side of the membrane. Asn-4, Asn-11, Asn-17, and Asn-26 each carry an N-linked (GlcNAc...) asparagine glycan. The chain crosses the membrane as a helical span at residues 42–64 (FTTTVQVVIFIGSLLGNFTVLWS). Topologically, residues 65–77 (TCRTTVFKSVTNR) are cytoplasmic. Residues 78–98 (FIKNLACSGICASVVCVPFDI) form a helical membrane-spanning segment. Residues 99-108 (ILSTSPHCCW) are Extracellular-facing. A helical transmembrane segment spans residues 109 to 129 (WIYTMLFCKVLKFLHKVFCSV). Residues 130–157 (TVLSFPAIALDRYYSVLYPLERKISDAK) are Cytoplasmic-facing. The chain crosses the membrane as a helical span at residues 158-177 (SRELVMYIWAHAVVASVPVF). Over 178–204 (AVTNVADIYATSTCTEVWSNSLGHLVY) the chain is Extracellular. Residues 205–225 (VLIYNVTTVIVPVAVVFLFLI) form a helical membrane-spanning segment. Residues 226-264 (LIRRALSASQKKKVIIAALRTPQNTISIPYASQREAELH) lie on the Cytoplasmic side of the membrane. A helical membrane pass occupies residues 265-285 (ATLLSMVTVFILCSVPYATLV). Over 286–301 (VYQTVLNVPNTSVFLL) the chain is Extracellular. Residues 302–322 (LTAIWLPKVSLLANPVLFLTV) traverse the membrane as a helical segment. Over 323-513 (NRSVRKCLVG…KVSIFPKVDS (191 aa)) the chain is Cytoplasmic. Residues 404-432 (VLTSSPEGEESQLAPSVPPPGTVDSVSRV) are disordered.

Belongs to the G-protein coupled receptor 1 family. In terms of tissue distribution, expressed in brain, lung, heart, stomach, intestine, cultured aortic smooth muscle cells and cardiac myocytes.

It localises to the cell membrane. Functionally, orphan receptor involved in normal circadian rhythm behavior. Acts through the G-protein subclass G(z)-alpha and has an agonist-independent basal activity to repress cAMP production. In Rattus norvegicus (Rat), this protein is Probable G-protein coupled receptor 176 (Gpr176).